Here is a 57-residue protein sequence, read N- to C-terminus: uncharacterized protein (57 aa).

The helical transmembrane segment at 34–54 (AALLDAAALVVIPGLLTAAAV) threads the bilayer.

It is found in the membrane. This is an uncharacterized protein from Dictyostelium discoideum (Social amoeba).